We begin with the raw amino-acid sequence, 211 residues long: 3-demethoxyubiquinol 3-hydroxylase (211 aa).

Fe cation-binding residues include Glu60, Glu90, His93, Glu142, Glu174, and His177.

Belongs to the COQ7 family. It depends on Fe cation as a cofactor.

Its subcellular location is the cell membrane. The enzyme catalyses a 5-methoxy-2-methyl-3-(all-trans-polyprenyl)benzene-1,4-diol + AH2 + O2 = a 3-demethylubiquinol + A + H2O. Its pathway is cofactor biosynthesis; ubiquinone biosynthesis. Its function is as follows. Catalyzes the hydroxylation of 2-nonaprenyl-3-methyl-6-methoxy-1,4-benzoquinol during ubiquinone biosynthesis. The sequence is that of 3-demethoxyubiquinol 3-hydroxylase from Francisella tularensis subsp. tularensis (strain FSC 198).